A 186-amino-acid chain; its full sequence is Lactoylglutathione lyase (186 aa).

The region spanning phenylalanine 28–arginine 175 is the VOC domain. Residues glutamine 31 and arginine 35 each contribute to the substrate site. Glutamine 31 serves as a coordination point for Zn(2+). Glutamate 97 contacts Zn(2+). Substrate is bound by residues asparagine 101, arginine 121, histidine 125, and lysine 155–methionine 156. Histidine 125 is a binding site for Zn(2+). Residue glutamate 171 coordinates Zn(2+). Residue glutamate 171 is the Proton donor/acceptor of the active site.

The protein belongs to the glyoxalase I family. Zn(2+) is required as a cofactor.

The enzyme catalyses (R)-S-lactoylglutathione = methylglyoxal + glutathione. It functions in the pathway secondary metabolite metabolism; methylglyoxal degradation; (R)-lactate from methylglyoxal: step 1/2. In terms of biological role, catalyzes the conversion of hemimercaptal, formed from methylglyoxal and glutathione, to S-lactoylglutathione. The protein is Lactoylglutathione lyase of Cicer arietinum (Chickpea).